Reading from the N-terminus, the 464-residue chain is ATP-dependent protease ATPase subunit HslU (464 aa).

Residues valine 18, 60–65 (GVGKTE), aspartate 277, glutamate 342, and arginine 414 contribute to the ATP site.

The protein belongs to the ClpX chaperone family. HslU subfamily. As to quaternary structure, a double ring-shaped homohexamer of HslV is capped on each side by a ring-shaped HslU homohexamer. The assembly of the HslU/HslV complex is dependent on binding of ATP.

It localises to the cytoplasm. ATPase subunit of a proteasome-like degradation complex; this subunit has chaperone activity. The binding of ATP and its subsequent hydrolysis by HslU are essential for unfolding of protein substrates subsequently hydrolyzed by HslV. HslU recognizes the N-terminal part of its protein substrates and unfolds these before they are guided to HslV for hydrolysis. This is ATP-dependent protease ATPase subunit HslU from Lactobacillus leichmannii.